The following is a 405-amino-acid chain: Argininosuccinate synthase (405 aa).

ATP contacts are provided by residues 10-18 (AYSGGLDTS) and A37. Positions 88 and 93 each coordinate L-citrulline. G118 contacts ATP. L-aspartate is bound by residues T120, N124, and D125. N124 contacts L-citrulline. L-citrulline is bound by residues R128, S179, S188, E264, and Y276.

The protein belongs to the argininosuccinate synthase family. Type 1 subfamily. As to quaternary structure, homotetramer.

It is found in the cytoplasm. The enzyme catalyses L-citrulline + L-aspartate + ATP = 2-(N(omega)-L-arginino)succinate + AMP + diphosphate + H(+). The protein operates within amino-acid biosynthesis; L-arginine biosynthesis; L-arginine from L-ornithine and carbamoyl phosphate: step 2/3. The protein is Argininosuccinate synthase of Pseudomonas putida (strain GB-1).